The following is a 156-amino-acid chain: ATP synthase subunit b', chloroplastic (156 aa).

Residues 20-42 (NGTLPLMALQFLTLMVLLNTIFY) form a helical membrane-spanning segment.

This sequence belongs to the ATPase B chain family. F-type ATPases have 2 components, F(1) - the catalytic core - and F(0) - the membrane proton channel. F(1) has five subunits: alpha(3), beta(3), gamma(1), delta(1), epsilon(1). F(0) has four main subunits: a(1), b(1), b'(1) and c(10-14). The alpha and beta chains form an alternating ring which encloses part of the gamma chain. F(1) is attached to F(0) by a central stalk formed by the gamma and epsilon chains, while a peripheral stalk is formed by the delta, b and b' chains.

It is found in the plastid. The protein resides in the chloroplast thylakoid membrane. Functionally, f(1)F(0) ATP synthase produces ATP from ADP in the presence of a proton or sodium gradient. F-type ATPases consist of two structural domains, F(1) containing the extramembraneous catalytic core and F(0) containing the membrane proton channel, linked together by a central stalk and a peripheral stalk. During catalysis, ATP synthesis in the catalytic domain of F(1) is coupled via a rotary mechanism of the central stalk subunits to proton translocation. Its function is as follows. Component of the F(0) channel, it forms part of the peripheral stalk, linking F(1) to F(0). The b'-subunit is a diverged and duplicated form of b found in plants and photosynthetic bacteria. This chain is ATP synthase subunit b', chloroplastic, found in Pyropia yezoensis (Susabi-nori).